Reading from the N-terminus, the 91-residue chain is Acylphosphatase (91 aa).

Positions 3–91 (CLKAVVKGKV…GNYGDFHIKY (89 aa)) constitute an Acylphosphatase-like domain. Catalysis depends on residues Arg-18 and Asn-36.

Belongs to the acylphosphatase family.

The catalysed reaction is an acyl phosphate + H2O = a carboxylate + phosphate + H(+). This Dehalococcoides mccartyi (strain ATCC BAA-2266 / KCTC 15142 / 195) (Dehalococcoides ethenogenes (strain 195)) protein is Acylphosphatase (acyP).